The chain runs to 292 residues: Acetyl-coenzyme A carboxylase carboxyl transferase subunit beta (292 aa).

Positions 29 to 292 (LWVKCSECGQ…HGVKDLMGAN (264 aa)) constitute a CoA carboxyltransferase N-terminal domain. Positions 33, 36, 52, and 55 each coordinate Zn(2+). The C4-type zinc-finger motif lies at 33-55 (CSECGQVAYRKDLISNFNVCSNC).

The protein belongs to the AccD/PCCB family. In terms of assembly, acetyl-CoA carboxylase is a heterohexamer composed of biotin carboxyl carrier protein (AccB), biotin carboxylase (AccC) and two subunits each of ACCase subunit alpha (AccA) and ACCase subunit beta (AccD). Zn(2+) serves as cofactor.

It localises to the cytoplasm. It carries out the reaction N(6)-carboxybiotinyl-L-lysyl-[protein] + acetyl-CoA = N(6)-biotinyl-L-lysyl-[protein] + malonyl-CoA. The protein operates within lipid metabolism; malonyl-CoA biosynthesis; malonyl-CoA from acetyl-CoA: step 1/1. Functionally, component of the acetyl coenzyme A carboxylase (ACC) complex. Biotin carboxylase (BC) catalyzes the carboxylation of biotin on its carrier protein (BCCP) and then the CO(2) group is transferred by the transcarboxylase to acetyl-CoA to form malonyl-CoA. In Prochlorococcus marinus (strain MIT 9515), this protein is Acetyl-coenzyme A carboxylase carboxyl transferase subunit beta.